Here is a 192-residue protein sequence, read N- to C-terminus: Signal peptidase complex catalytic subunit SEC11C (192 aa).

The Cytoplasmic segment spans residues 1 to 28 (MVRAGAVGTHLPTSSLDIFGDLRKMNKR). Residues 29-48 (QLYYQVLNFAMIVSSALMIW) traverse the membrane as a helical; Signal-anchor for type II membrane protein segment. The Lumenal segment spans residues 49–192 (KGLIVLTGSE…GAYVLLKRES (144 aa)). Active-site charge relay system residues include S68, H108, and D134. A C-terminal short (CTS) helix region spans residues 177–188 (ALLAVMGAYVLL).

Belongs to the peptidase S26B family. In terms of assembly, component of the signal peptidase complex paralog C (SPC-C) composed of a catalytic subunit SEC11C and three accessory subunits SPCS1, SPCS2 and SPCS3. Within the complex, interacts with SPCS2 and SPCS3. The complex induces a local thinning of the ER membrane which is used to measure the length of the signal peptide (SP) h-region of protein substrates. This ensures the selectivity of the complex towards h-regions shorter than 18-20 amino acids. Post-translationally, may undergo processing at the N-terminus.

The protein localises to the endoplasmic reticulum membrane. The enzyme catalyses Cleavage of hydrophobic, N-terminal signal or leader sequences from secreted and periplasmic proteins.. In terms of biological role, catalytic component of the signal peptidase complex (SPC) which catalyzes the cleavage of N-terminal signal sequences from nascent proteins as they are translocated into the lumen of the endoplasmic reticulum. Specifically cleaves N-terminal signal peptides that contain a hydrophobic alpha-helix (h-region) shorter than 18-20 amino acids. The sequence is that of Signal peptidase complex catalytic subunit SEC11C (Sec11c) from Mus musculus (Mouse).